The sequence spans 492 residues: Diacylglycerol kinase 7 (492 aa).

The region spanning 90–248 (APHAPMVVFI…SWKIVVSMPS (159 aa)) is the DAGKc domain.

Belongs to the eukaryotic diacylglycerol kinase family. As to quaternary structure, monomer. As to expression, highly expressed in flowers, and at low levels in roots, stems and leaves.

It carries out the reaction a 1,2-diacyl-sn-glycerol + ATP = a 1,2-diacyl-sn-glycero-3-phosphate + ADP + H(+). Phosphorylates the second messenger diacylglycerol (DAG) to generate phosphatidic acid (PA), another important signaling molecule. PA is required for plant development and responses to abiotic stress and pathogen attack. May be involved in the accumulation of PA during cold stress xhibits high specificity for 1,2-dioleoyl-sn-glycerol (1,2-DOG), 1-palmitoyl, 2-oleoyl-sn-glycerol (1,2 POG), 1-stearoyl, 2-linoleoyl-sn-glycerol (1,2-SLG) and 1-oleoyl, 2-palmitoyl-sn-glycerol (1,2-OPG). This chain is Diacylglycerol kinase 7 (DGK7), found in Arabidopsis thaliana (Mouse-ear cress).